Consider the following 60-residue polypeptide: MTQVVVGQNEPIESALRRFKRQVAKAGIYTDFKKHQFFETPQEKHKRKEATRRRQRSRRR.

The tract at residues 36 to 60 (QFFETPQEKHKRKEATRRRQRSRRR) is disordered. The span at 44 to 60 (KHKRKEATRRRQRSRRR) shows a compositional bias: basic residues.

The protein belongs to the bacterial ribosomal protein bS21 family.

The sequence is that of Small ribosomal subunit protein bS21 (rpsU) from Synechocystis sp. (strain ATCC 27184 / PCC 6803 / Kazusa).